Here is a 156-residue protein sequence, read N- to C-terminus: Deoxyuridine 5'-triphosphate nucleotidohydrolase (156 aa).

Residues 76 to 78 (RSG), Asn89, 93 to 95 (TVD), and Lys103 each bind substrate.

Belongs to the dUTPase family. Mg(2+) is required as a cofactor.

The enzyme catalyses dUTP + H2O = dUMP + diphosphate + H(+). The protein operates within pyrimidine metabolism; dUMP biosynthesis; dUMP from dCTP (dUTP route): step 2/2. In terms of biological role, this enzyme is involved in nucleotide metabolism: it produces dUMP, the immediate precursor of thymidine nucleotides and it decreases the intracellular concentration of dUTP so that uracil cannot be incorporated into DNA. This Rhizobium etli (strain CIAT 652) protein is Deoxyuridine 5'-triphosphate nucleotidohydrolase.